Reading from the N-terminus, the 360-residue chain is MDSNKEKALAAALGQIEKQFGKGSIMRLGDTQSLDIDSIPTGSLSLDIALGIGGLPMGRIVEIFGPESSGKTTLTLEVIAQAQKAGKTCAFIDAEHALDPIYAGKLGVKVDDLLVSQPDTGEQALEICDMLVRSGAVDVIIIDSVAALTPKAEIEGDMGDSHVGLQARLMSQALRKLTGNIKNANCLCIFINQIRMKIGVMFGNPETTTGGNALKFYASVRLDIRRTGAIKDGEEIVGNETRVKVVKNKVAPPFKQADFQILYGEGISKESELIDLGVKCKLIDKSGAWYAYKGDKIGQGKANAMKYLKENTAAAEEIELKLRELLLSHNPPTEIAVAPVVEEFTPSDDELDSLSLSDDI.

Residue 65-72 (GPESSGKT) participates in ATP binding.

This sequence belongs to the RecA family.

Its subcellular location is the cytoplasm. Functionally, can catalyze the hydrolysis of ATP in the presence of single-stranded DNA, the ATP-dependent uptake of single-stranded DNA by duplex DNA, and the ATP-dependent hybridization of homologous single-stranded DNAs. It interacts with LexA causing its activation and leading to its autocatalytic cleavage. The chain is Protein RecA from Tolumonas auensis (strain DSM 9187 / NBRC 110442 / TA 4).